The chain runs to 204 residues: Viral interleukin-6 homolog (204 aa).

A signal peptide spans 1–22 (MRWFKLWSILLVGSLLVSGTRG).

Belongs to the IL-6 superfamily. Interacts with host IL6ST.

Functionally, initiates signal transduction through binding to interleukin-6 receptor subunit beta IL6ST, independently of the cognate IL6 receptor IL6R. In infected primary effusion lymphoma cells, promotes proliferation of cells, protects them from apoptosis, and promotes immune evasion of interferon activity. Also drives blood to lymphatic endothelial cell differentiation. The polypeptide is Viral interleukin-6 homolog (K2) (Homo sapiens (Human)).